Here is a 104-residue protein sequence, read N- to C-terminus: L-rhamnose mutarotase (104 aa).

A substrate-binding site is contributed by tyrosine 18. The active-site Proton donor is histidine 22. Substrate-binding positions include tyrosine 41 and 76–77; that span reads WW.

Belongs to the rhamnose mutarotase family. As to quaternary structure, homodimer.

Its subcellular location is the cytoplasm. It catalyses the reaction alpha-L-rhamnose = beta-L-rhamnose. It participates in carbohydrate metabolism; L-rhamnose metabolism. Involved in the anomeric conversion of L-rhamnose. In Klebsiella pneumoniae subsp. pneumoniae (strain ATCC 700721 / MGH 78578), this protein is L-rhamnose mutarotase.